The sequence spans 370 residues: MPFAPLANDSFLRACRRQATDYTPLWLMRQAGRYLPEYQASRARAGSFMGLATSVDYATEVTLQPLERFPLDAAILFSDILTVPDAMGLGLSFAEGEGPRLAKVVRDEATVAALAVPDMARLRYVFDAVASIRRALNGRVPLIGFSGSPWTLACYMVEGRGSDDYRLVKGLMYSRPDLMHRILAINADTVAAYLNAQIDAGAQAVMVFDSWGGVLADGAFQAFSLAYTARVLAQLQRTGVDGSDVPRIVFTKGGAPWLQDMQSLDCQVLGLDWTANLASARALVGGAVGGPGKALQGNIDPHVLLAPPARIVQQVQQVLDSFGPPHTDRSTTGPTHIFNLGHGISQFTPPAHVAALVEAVHSYSRAQRQG.

Substrate-binding positions include 29–33 (RQAGR), D79, Y155, S210, and H342.

The protein belongs to the uroporphyrinogen decarboxylase family. Homodimer.

The protein localises to the cytoplasm. The catalysed reaction is uroporphyrinogen III + 4 H(+) = coproporphyrinogen III + 4 CO2. The protein operates within porphyrin-containing compound metabolism; protoporphyrin-IX biosynthesis; coproporphyrinogen-III from 5-aminolevulinate: step 4/4. Its function is as follows. Catalyzes the decarboxylation of four acetate groups of uroporphyrinogen-III to yield coproporphyrinogen-III. This is Uroporphyrinogen decarboxylase from Verminephrobacter eiseniae (strain EF01-2).